We begin with the raw amino-acid sequence, 1433 residues long: DNA-directed RNA polymerase subunit beta' (1433 aa).

The Zn(2+) site is built by C66, C68, C81, and C84. Residues 328–347 form a disordered region; sequence RKSSAVKTDSNRPLKSLSDS. The segment covering 329–346 has biased composition (polar residues); it reads KSSAVKTDSNRPLKSLSD. Mg(2+) contacts are provided by D477, D479, and D481. Residues C825, C899, C906, and C909 each contribute to the Zn(2+) site.

It belongs to the RNA polymerase beta' chain family. The RNAP catalytic core consists of 2 alpha, 1 beta, 1 beta' and 1 omega subunit. When a sigma factor is associated with the core the holoenzyme is formed, which can initiate transcription. Mg(2+) is required as a cofactor. Zn(2+) serves as cofactor.

It carries out the reaction RNA(n) + a ribonucleoside 5'-triphosphate = RNA(n+1) + diphosphate. In terms of biological role, DNA-dependent RNA polymerase catalyzes the transcription of DNA into RNA using the four ribonucleoside triphosphates as substrates. The polypeptide is DNA-directed RNA polymerase subunit beta' (Christiangramia forsetii (strain DSM 17595 / CGMCC 1.15422 / KT0803) (Gramella forsetii)).